The primary structure comprises 508 residues: Glycerol kinase (508 aa).

Position 14 (T14) interacts with ADP. Residues T14, T15, and S16 each contribute to the ATP site. Position 14 (T14) interacts with sn-glycerol 3-phosphate. R18 contacts ADP. Sn-glycerol 3-phosphate contacts are provided by R84, E85, and Y136. Glycerol is bound by residues R84, E85, and Y136. H232 carries the phosphohistidine; by HPr modification. D246 lines the sn-glycerol 3-phosphate pocket. Positions 246 and 247 each coordinate glycerol. ADP contacts are provided by T268 and G311. ATP contacts are provided by T268, G311, Q315, and G412. Residues G412 and N416 each contribute to the ADP site.

Belongs to the FGGY kinase family. Homotetramer and homodimer (in equilibrium). In terms of processing, the phosphoenolpyruvate-dependent sugar phosphotransferase system (PTS), including enzyme I, and histidine-containing protein (HPr) are required for the phosphorylation, which leads to the activation of the enzyme.

The enzyme catalyses glycerol + ATP = sn-glycerol 3-phosphate + ADP + H(+). It participates in polyol metabolism; glycerol degradation via glycerol kinase pathway; sn-glycerol 3-phosphate from glycerol: step 1/1. Its activity is regulated as follows. Activated by phosphorylation and inhibited by fructose 1,6-bisphosphate (FBP). In terms of biological role, key enzyme in the regulation of glycerol uptake and metabolism. Catalyzes the phosphorylation of glycerol to yield sn-glycerol 3-phosphate. The protein is Glycerol kinase of Streptococcus pyogenes serotype M18 (strain MGAS8232).